Reading from the N-terminus, the 121-residue chain is Large ribosomal subunit protein eL18 (121 aa).

This sequence belongs to the eukaryotic ribosomal protein eL18 family.

This is Large ribosomal subunit protein eL18 from Methanocaldococcus jannaschii (strain ATCC 43067 / DSM 2661 / JAL-1 / JCM 10045 / NBRC 100440) (Methanococcus jannaschii).